A 247-amino-acid chain; its full sequence is Cytochrome c oxidase subunit 2 (247 aa).

Positions 1–11 are cleaved as a signal peptide; sequence MLLIINNIINN. Residues 12–38 lie on the Mitochondrial intermembrane side of the membrane; sequence DVPTPWGVYFQDSATPNHEGIIELHDN. A helical transmembrane segment spans residues 39–59; the sequence is IMFYLVLILCLVSWLLFSIVK. Residues 60-78 are Mitochondrial matrix-facing; the sequence is DGSKNPLPHKYLVHGQTIE. Residues 79–101 form a helical membrane-spanning segment; it reads IIWTILPALVLLVIAFPSFILLY. The Mitochondrial intermembrane segment spans residues 102-247; the sequence is LCDEVISPAM…KEFLTWLNEQ (146 aa). Cu cation-binding residues include H182, C217, E219, C221, H225, and M228. Residue E219 coordinates Mg(2+).

This sequence belongs to the cytochrome c oxidase subunit 2 family. In terms of assembly, component of the cytochrome c oxidase (complex IV, CIV), a multisubunit enzyme composed of a catalytic core of 3 subunits and several supernumerary subunits. The complex exists as a monomer or a dimer and forms supercomplexes (SCs) in the inner mitochondrial membrane with ubiquinol-cytochrome c oxidoreductase (cytochrome b-c1 complex, complex III, CIII). It depends on Cu cation as a cofactor. Post-translationally, the signal sequence of COX2 is processed by IMP1.

It is found in the mitochondrion inner membrane. It carries out the reaction 4 Fe(II)-[cytochrome c] + O2 + 8 H(+)(in) = 4 Fe(III)-[cytochrome c] + 2 H2O + 4 H(+)(out). Its function is as follows. Component of the cytochrome c oxidase, the last enzyme in the mitochondrial electron transport chain which drives oxidative phosphorylation. The respiratory chain contains 3 multisubunit complexes succinate dehydrogenase (complex II, CII), ubiquinol-cytochrome c oxidoreductase (cytochrome b-c1 complex, complex III, CIII) and cytochrome c oxidase (complex IV, CIV), that cooperate to transfer electrons derived from NADH and succinate to molecular oxygen, creating an electrochemical gradient over the inner membrane that drives transmembrane transport and the ATP synthase. Cytochrome c oxidase is the component of the respiratory chain that catalyzes the reduction of oxygen to water. Electrons originating from reduced cytochrome c in the intermembrane space (IMS) are transferred via the dinuclear copper A center (CU(A)) of subunit 2 and heme A of subunit 1 to the active site in subunit 1, a binuclear center (BNC) formed by heme A3 and copper B (CU(B)). The BNC reduces molecular oxygen to 2 water molecules using 4 electrons from cytochrome c in the IMS and 4 protons from the mitochondrial matrix. The sequence is that of Cytochrome c oxidase subunit 2 (COX2) from Wickerhamomyces canadensis (Yeast).